Reading from the N-terminus, the 427-residue chain is Sensor histidine kinase ArsS (427 aa).

The next 2 membrane-spanning stretches (helical) occupy residues 3–23 (FSIF…FGAF) and 131–151 (NYFL…LFVL). Residues 151–203 (LQSLLPLRELRSQVKPFAQGDKSVSCKSKQKDEIGDLANEFDNCILKINAMNE) form the HAMP domain. The region spanning 211 to 398 (SIMHELRTPI…LSYHYSNGRI (188 aa)) is the Histidine kinase domain. His-214 carries the phosphohistidine; by autocatalysis modification.

In terms of processing, autophosphorylated.

The protein localises to the membrane. The enzyme catalyses ATP + protein L-histidine = ADP + protein N-phospho-L-histidine.. In terms of biological role, member of the two-component regulatory system ArsS/ArsR that regulates genes involved in biofilm formation and acid adaptation by acting on major ammonia-producing pathways. Functions as a sensor protein kinase which is autophosphorylated at a histidine residue and transfers its phosphate group to the conserved aspartic acid residue in the regulatory domain of ArsR. In turn, ArsR binds to the upstream promoter regions of target genes including ureA, amiE and amiF to positively regulate their expression in response to acidic pH. Also participates in acidic acclimatation in a phosphorylation-independent pathway by regulating acid-induced trafficking of urease and its accessory proteins to the inner membrane. The chain is Sensor histidine kinase ArsS from Helicobacter pylori (strain ATCC 700392 / 26695) (Campylobacter pylori).